Consider the following 182-residue polypeptide: MITKELEQNMRKSVEAAQRNFNTIRTGRANTSLLDRLTVEYYGADTPLKSLATISTPDSQTISIQPFDLSSLVLIEKSIAMSDLGFTPNNDGKIIRINIPPLTEERRKEFCKLASKYAEEGKVALRNIRRDAIERIKKSEKESEISEDQSRDEQDNVQKLTDRFITEIEKNLSDKEQEILKV.

The segment at 137–158 (KKSEKESEISEDQSRDEQDNVQ) is disordered.

It belongs to the RRF family.

It is found in the cytoplasm. Functionally, responsible for the release of ribosomes from messenger RNA at the termination of protein biosynthesis. May increase the efficiency of translation by recycling ribosomes from one round of translation to another. The polypeptide is Ribosome-recycling factor (Prochlorococcus marinus (strain MIT 9211)).